The chain runs to 431 residues: Glycerol-3-phosphate dehydrogenase [NAD(P)+] (431 aa).

The NADPH site is built by Ser-79, Phe-80, Arg-100, and Lys-173. Sn-glycerol 3-phosphate contacts are provided by Lys-173 and Gly-201. Residue Ala-205 coordinates NADPH. Sn-glycerol 3-phosphate contacts are provided by Lys-256, Asp-309, Ser-319, Arg-320, and Asn-321. Lys-256 functions as the Proton acceptor in the catalytic mechanism. NADPH is bound at residue Arg-320. Glu-346 is a binding site for NADPH.

The protein belongs to the NAD-dependent glycerol-3-phosphate dehydrogenase family.

Its subcellular location is the cytoplasm. The catalysed reaction is sn-glycerol 3-phosphate + NAD(+) = dihydroxyacetone phosphate + NADH + H(+). It carries out the reaction sn-glycerol 3-phosphate + NADP(+) = dihydroxyacetone phosphate + NADPH + H(+). It participates in membrane lipid metabolism; glycerophospholipid metabolism. Catalyzes the reduction of the glycolytic intermediate dihydroxyacetone phosphate (DHAP) to sn-glycerol 3-phosphate (G3P), the key precursor for phospholipid synthesis. This is Glycerol-3-phosphate dehydrogenase [NAD(P)+] from Psychrobacter cryohalolentis (strain ATCC BAA-1226 / DSM 17306 / VKM B-2378 / K5).